Here is a 601-residue protein sequence, read N- to C-terminus: Aspartate--tRNA(Asp/Asn) ligase (601 aa).

Glu-174 provides a ligand contact to L-aspartate. An aspartate region spans residues 198–201 (QLFK). L-aspartate is bound at residue Arg-220. ATP is bound by residues 220 to 222 (RDE) and Gln-229. His-459 is an L-aspartate binding site. Glu-493 is an ATP binding site. Residue Arg-500 coordinates L-aspartate. Position 545–548 (545–548 (GLDR)) interacts with ATP.

The protein belongs to the class-II aminoacyl-tRNA synthetase family. Type 1 subfamily. In terms of assembly, homodimer.

It localises to the cytoplasm. It carries out the reaction tRNA(Asx) + L-aspartate + ATP = L-aspartyl-tRNA(Asx) + AMP + diphosphate. Its function is as follows. Aspartyl-tRNA synthetase with relaxed tRNA specificity since it is able to aspartylate not only its cognate tRNA(Asp) but also tRNA(Asn). Reaction proceeds in two steps: L-aspartate is first activated by ATP to form Asp-AMP and then transferred to the acceptor end of tRNA(Asp/Asn). The chain is Aspartate--tRNA(Asp/Asn) ligase from Variovorax paradoxus (strain S110).